Here is a 618-residue protein sequence, read N- to C-terminus: 1-deoxy-D-xylulose-5-phosphate synthase (618 aa).

Thiamine diphosphate is bound by residues histidine 70 and 111 to 113 (GHS). Aspartate 142 contacts Mg(2+). Thiamine diphosphate is bound by residues 143-144 (GS), asparagine 171, tyrosine 278, and glutamate 360. Position 171 (asparagine 171) interacts with Mg(2+).

This sequence belongs to the transketolase family. DXPS subfamily. Homodimer. The cofactor is Mg(2+). It depends on thiamine diphosphate as a cofactor.

The catalysed reaction is D-glyceraldehyde 3-phosphate + pyruvate + H(+) = 1-deoxy-D-xylulose 5-phosphate + CO2. It functions in the pathway metabolic intermediate biosynthesis; 1-deoxy-D-xylulose 5-phosphate biosynthesis; 1-deoxy-D-xylulose 5-phosphate from D-glyceraldehyde 3-phosphate and pyruvate: step 1/1. Catalyzes the acyloin condensation reaction between C atoms 2 and 3 of pyruvate and glyceraldehyde 3-phosphate to yield 1-deoxy-D-xylulose-5-phosphate (DXP). The protein is 1-deoxy-D-xylulose-5-phosphate synthase of Helicobacter pylori (strain ATCC 700392 / 26695) (Campylobacter pylori).